We begin with the raw amino-acid sequence, 339 residues long: Ketol-acid reductoisomerase (NADP(+)) (339 aa).

One can recognise a KARI N-terminal Rossmann domain in the interval 1-182; sequence MRVYYDRDAD…GGGRSGIIET (182 aa). Residues 24–27, Lys48, Ser51, Thr53, and 83–86 contribute to the NADP(+) site; these read YGSQ and DELQ. Residue His108 is part of the active site. An NADP(+)-binding site is contributed by Gly134. Positions 183–328 constitute a KARI C-terminal knotted domain; it reads NFKEECETDL…AKLRGMMPWI (146 aa). The Mg(2+) site is built by Asp191, Glu195, Glu227, and Glu231. Ser252 contributes to the substrate binding site.

This sequence belongs to the ketol-acid reductoisomerase family. Mg(2+) serves as cofactor.

It carries out the reaction (2R)-2,3-dihydroxy-3-methylbutanoate + NADP(+) = (2S)-2-acetolactate + NADPH + H(+). It catalyses the reaction (2R,3R)-2,3-dihydroxy-3-methylpentanoate + NADP(+) = (S)-2-ethyl-2-hydroxy-3-oxobutanoate + NADPH + H(+). Its pathway is amino-acid biosynthesis; L-isoleucine biosynthesis; L-isoleucine from 2-oxobutanoate: step 2/4. The protein operates within amino-acid biosynthesis; L-valine biosynthesis; L-valine from pyruvate: step 2/4. Involved in the biosynthesis of branched-chain amino acids (BCAA). Catalyzes an alkyl-migration followed by a ketol-acid reduction of (S)-2-acetolactate (S2AL) to yield (R)-2,3-dihydroxy-isovalerate. In the isomerase reaction, S2AL is rearranged via a Mg-dependent methyl migration to produce 3-hydroxy-3-methyl-2-ketobutyrate (HMKB). In the reductase reaction, this 2-ketoacid undergoes a metal-dependent reduction by NADPH to yield (R)-2,3-dihydroxy-isovalerate. This chain is Ketol-acid reductoisomerase (NADP(+)), found in Sinorhizobium fredii (strain NBRC 101917 / NGR234).